Consider the following 1202-residue polypeptide: DNA-directed RNA polymerase subunit beta (1202 aa).

Residues 1151-1162 show a composition bias toward acidic residues; sequence LRDMDEEDDDVV. A disordered region spans residues 1151 to 1202; it reads LRDMDEEDDDVVNVDALSKYAEKQNEKTNASAEEAKAPSTESAPVETKNNQN. A compositionally biased stretch (polar residues) spans 1189–1202; it reads STESAPVETKNNQN.

The protein belongs to the RNA polymerase beta chain family. The RNAP catalytic core consists of 2 alpha, 1 beta, 1 beta' and 1 omega subunit. When a sigma factor is associated with the core the holoenzyme is formed, which can initiate transcription.

It catalyses the reaction RNA(n) + a ribonucleoside 5'-triphosphate = RNA(n+1) + diphosphate. In terms of biological role, DNA-dependent RNA polymerase catalyzes the transcription of DNA into RNA using the four ribonucleoside triphosphates as substrates. The sequence is that of DNA-directed RNA polymerase subunit beta from Pediococcus pentosaceus (strain ATCC 25745 / CCUG 21536 / LMG 10740 / 183-1w).